We begin with the raw amino-acid sequence, 231 residues long: Orotidine 5'-phosphate decarboxylase (231 aa).

Substrate contacts are provided by residues Asp11, Lys33, 60–69 (DLKFHDIPNT), Thr120, Arg181, Gln190, Gly210, and Arg211. The active-site Proton donor is Lys62.

The protein belongs to the OMP decarboxylase family. Type 1 subfamily. In terms of assembly, homodimer.

It catalyses the reaction orotidine 5'-phosphate + H(+) = UMP + CO2. It participates in pyrimidine metabolism; UMP biosynthesis via de novo pathway; UMP from orotate: step 2/2. In terms of biological role, catalyzes the decarboxylation of orotidine 5'-monophosphate (OMP) to uridine 5'-monophosphate (UMP). This is Orotidine 5'-phosphate decarboxylase from Pseudoalteromonas atlantica (strain T6c / ATCC BAA-1087).